The primary structure comprises 158 residues: MTEFTHINSNGEANMVDVSNKRETVREARAEAFVSMSAETLAMIVSGEHHKGDVFATARIAGIQAAKRTWELIPLCHPLLLSKVEVKLTALLDTNQVRIESLCKLTGKTGVEMEALTAASVAALTIYDMCKAVQKDMVISNVRLLEKTGGKSGHFKVE.

Residues 75-77 and 113-114 contribute to the substrate site; these read LCH and ME. Asp128 is a catalytic residue.

The protein belongs to the MoaC family. In terms of assembly, homohexamer; trimer of dimers.

It carries out the reaction (8S)-3',8-cyclo-7,8-dihydroguanosine 5'-triphosphate = cyclic pyranopterin phosphate + diphosphate. It functions in the pathway cofactor biosynthesis; molybdopterin biosynthesis. Functionally, catalyzes the conversion of (8S)-3',8-cyclo-7,8-dihydroguanosine 5'-triphosphate to cyclic pyranopterin monophosphate (cPMP). This Mannheimia succiniciproducens (strain KCTC 0769BP / MBEL55E) protein is Cyclic pyranopterin monophosphate synthase.